Consider the following 399-residue polypeptide: Chorismate synthase (399 aa).

2 residues coordinate NADP(+): arginine 40 and arginine 46. FMN contacts are provided by residues 134–136, 255–256, glycine 299, 314–318, and arginine 340; these read RAS, QA, and KPIST.

This sequence belongs to the chorismate synthase family. As to quaternary structure, homotetramer. The cofactor is FMNH2.

The enzyme catalyses 5-O-(1-carboxyvinyl)-3-phosphoshikimate = chorismate + phosphate. It functions in the pathway metabolic intermediate biosynthesis; chorismate biosynthesis; chorismate from D-erythrose 4-phosphate and phosphoenolpyruvate: step 7/7. Its function is as follows. Catalyzes the anti-1,4-elimination of the C-3 phosphate and the C-6 proR hydrogen from 5-enolpyruvylshikimate-3-phosphate (EPSP) to yield chorismate, which is the branch point compound that serves as the starting substrate for the three terminal pathways of aromatic amino acid biosynthesis. This reaction introduces a second double bond into the aromatic ring system. The sequence is that of Chorismate synthase from Mycolicibacterium smegmatis (strain ATCC 700084 / mc(2)155) (Mycobacterium smegmatis).